Here is a 132-residue protein sequence, read N- to C-terminus: Ribosome-binding factor A (132 aa).

The tract at residues 113-132 (EANSTRAKDDDEADAPAKDD) is disordered.

Belongs to the RbfA family. Monomer. Binds 30S ribosomal subunits, but not 50S ribosomal subunits or 70S ribosomes.

The protein localises to the cytoplasm. Functionally, one of several proteins that assist in the late maturation steps of the functional core of the 30S ribosomal subunit. Associates with free 30S ribosomal subunits (but not with 30S subunits that are part of 70S ribosomes or polysomes). Required for efficient processing of 16S rRNA. May interact with the 5'-terminal helix region of 16S rRNA. The polypeptide is Ribosome-binding factor A (Burkholderia ambifaria (strain MC40-6)).